The chain runs to 396 residues: tRNA-specific 2-thiouridylase MnmA (396 aa).

Residues 35 to 42 (GLSGGVDS) and L61 each bind ATP. C122 serves as the catalytic Nucleophile. A disulfide bridge connects residues C122 and C221. G147 is an ATP binding site. The segment at 171 to 173 (KDQ) is interaction with tRNA. C221 serves as the catalytic Cysteine persulfide intermediate. The tract at residues 326–327 (RY) is interaction with tRNA.

This sequence belongs to the MnmA/TRMU family.

The protein localises to the cytoplasm. The catalysed reaction is S-sulfanyl-L-cysteinyl-[protein] + uridine(34) in tRNA + AH2 + ATP = 2-thiouridine(34) in tRNA + L-cysteinyl-[protein] + A + AMP + diphosphate + H(+). Its function is as follows. Catalyzes the 2-thiolation of uridine at the wobble position (U34) of tRNA, leading to the formation of s(2)U34. This Parasynechococcus marenigrum (strain WH8102) protein is tRNA-specific 2-thiouridylase MnmA.